An 89-amino-acid chain; its full sequence is Neuropeptide S (89 aa).

Residues 1 to 23 form the signal peptide; that stretch reads MIGSLKFNFILFLLISTMHMFWC. A propeptide spanning residues 24–67 is cleaved from the precursor; the sequence is HPISSSKVPGKSDYFVILLNSCPTRMDRRVGLDFLKPILEKTLM.

The protein localises to the secreted. Modulates arousal and anxiety. May play an important anorexigenic role. Binds to its receptor NPSR1 with nanomolar affinity to increase intracellular calcium concentrations. This chain is Neuropeptide S (NPS), found in Bos taurus (Bovine).